The sequence spans 147 residues: Ponticulin-like protein C2 (147 aa).

Positions 1-20 (MKFTKPLLLLIVAIIASSNA) are cleaved as a signal peptide. Asn118 carries GPI-like-anchor amidated asparagine lipidation. Asn118 is a glycosylation site (N-linked (GlcNAc...) asparagine). Positions 119-147 (SSESDSSDSTRIGASFALFALALLSMLAL) are cleaved as a propeptide — removed in mature form.

Belongs to the ponticulin family. In terms of processing, the GPI-like-anchor contains a phosphoceramide group, rather than a phosphatidyl group.

The protein resides in the cell membrane. The polypeptide is Ponticulin-like protein C2 (ponC2) (Dictyostelium discoideum (Social amoeba)).